The following is a 362-amino-acid chain: Guanine nucleotide-binding protein alpha-10 subunit (362 aa).

Residue Gly2 is the site of N-myristoyl glycine attachment. Cys4 is lipidated: S-palmitoyl cysteine. The G-alpha domain occupies 35–362 (LEQSVLLIGP…QENLKDTGMI (328 aa)). Residues 38 to 51 (SVLLIGPGESGKST) are G1 motif. GTP is bound by residues 43 to 50 (GPGESGKS), 184 to 190 (VRIRVPT), 209 to 213 (DCGGQ), 278 to 281 (NKID), and Ala335. Residues Ser50 and Thr190 each contribute to the Mg(2+) site. The tract at residues 182 to 190 (DIVRIRVPT) is G2 motif. Residues 205–214 (LSVIDCGGQR) are G3 motif. The tract at residues 274–281 (ILFLNKID) is G4 motif. The tract at residues 333–337 (TCAIS) is G5 motif.

The protein belongs to the G-alpha family. In terms of assembly, g proteins are composed of 3 units; alpha, beta and gamma. The alpha chain contains the guanine nucleotide binding site.

In terms of biological role, guanine nucleotide-binding proteins (G proteins) are involved as modulators or transducers in various transmembrane signaling systems. This is Guanine nucleotide-binding protein alpha-10 subunit (gpa-10) from Caenorhabditis briggsae.